The chain runs to 580 residues: 3-(3-hydroxy-phenyl)propionate/3-hydroxycinnamic acid hydroxylase (580 aa).

FAD is bound by residues 14-43 (DVLV…VVEE) and 291-301 (FRRGRLLLAGD).

This sequence belongs to the PheA/TfdB FAD monooxygenase family. Requires FAD as cofactor.

It catalyses the reaction 3-(3-hydroxyphenyl)propanoate + NADH + O2 + H(+) = 3-(2,3-dihydroxyphenyl)propanoate + NAD(+) + H2O. It carries out the reaction (2E)-3-(3-hydroxyphenyl)prop-2-enoate + NADH + O2 + H(+) = (2E)-3-(2,3-dihydroxyphenyl)prop-2-enoate + NAD(+) + H2O. It participates in aromatic compound metabolism; 3-phenylpropanoate degradation. Functionally, catalyzes the insertion of one atom of molecular oxygen into position 2 of the phenyl ring of 3-(3-hydroxyphenyl)propionate (3-HPP) and hydroxycinnamic acid (3HCI). This chain is 3-(3-hydroxy-phenyl)propionate/3-hydroxycinnamic acid hydroxylase, found in Mycobacterium avium (strain 104).